A 1494-amino-acid polypeptide reads, in one-letter code: Neuropathy target esterase sws (1494 aa).

Over Met-1–Thr-35 the chain is Lumenal. The chain crosses the membrane as a helical span at residues Met-36 to Phe-56. Topologically, residues Lys-57 to Leu-1494 are cytoplasmic. Residue Ile-176 to Arg-303 participates in a nucleoside 3',5'-cyclic phosphate binding. Residues Ala-362–Ala-372 show a composition bias toward low complexity. 2 disordered regions span residues Ala-362–Gly-405 and Asn-422–Val-452. Over residues Gly-435–Gln-449 the composition is skewed to polar residues. A Phosphoserine modification is found at Ser-443. Residues Glu-474–Arg-601 and Ile-590–Arg-717 each bind a nucleoside 3',5'-cyclic phosphate. The PNPLA domain occupies Leu-944 to Arg-1110. Residues Gly-948 to Gly-953 carry the GXGXXG motif. The GXSXG signature appears at Gly-975–Gly-979. The active-site Nucleophile is the Ser-977. Asp-1097 (proton acceptor) is an active-site residue. The short motif at Asp-1097 to Gly-1099 is the DGA/G element. A disordered region spans residues Met-1367–Leu-1494. The span at Ala-1370 to Ala-1381 shows a compositional bias: polar residues. Basic and acidic residues-rich tracts occupy residues Ser-1389–Ser-1420 and Met-1452–Arg-1483. The segment covering Ser-1484–Leu-1494 has biased composition (polar residues).

It belongs to the NTE family. As to quaternary structure, interacts with Pka-C3; interaction inhibits the catalytic function of Pka-C3 and the esterase activity of sws.

The protein localises to the endoplasmic reticulum membrane. It carries out the reaction a 1-acyl-sn-glycero-3-phosphocholine + H2O = sn-glycerol 3-phosphocholine + a fatty acid + H(+). Phospholipase B that deacylates intracellular phosphatidylcholine (PtdCho), generating glycerophosphocholine (GroPtdCho). This deacylation occurs at both sn-2 and sn-1 positions of PtdCho. Its specific chemical modification by certain organophosphorus (OP) compounds leads to distal axonopathy. Plays a role in the signaling mechanism between neurons and glia that regulates glia wrapping during development of the adult brain. Essential for membrane lipid homeostasis and cell survival in both neurons and glia of the adult brain. This is Neuropathy target esterase sws from Drosophila pseudoobscura pseudoobscura (Fruit fly).